Consider the following 164-residue polypeptide: Nucleotide-binding protein Emin_0136 (164 aa).

It belongs to the YajQ family.

Its function is as follows. Nucleotide-binding protein. The sequence is that of Nucleotide-binding protein Emin_0136 from Elusimicrobium minutum (strain Pei191).